A 145-amino-acid polypeptide reads, in one-letter code: D-aminoacyl-tRNA deacylase (145 aa).

The Gly-cisPro motif, important for rejection of L-amino acids motif lies at Gly137–Pro138.

It belongs to the DTD family. Homodimer.

Its subcellular location is the cytoplasm. It catalyses the reaction glycyl-tRNA(Ala) + H2O = tRNA(Ala) + glycine + H(+). The enzyme catalyses a D-aminoacyl-tRNA + H2O = a tRNA + a D-alpha-amino acid + H(+). Functionally, an aminoacyl-tRNA editing enzyme that deacylates mischarged D-aminoacyl-tRNAs. Also deacylates mischarged glycyl-tRNA(Ala), protecting cells against glycine mischarging by AlaRS. Acts via tRNA-based rather than protein-based catalysis; rejects L-amino acids rather than detecting D-amino acids in the active site. By recycling D-aminoacyl-tRNA to D-amino acids and free tRNA molecules, this enzyme counteracts the toxicity associated with the formation of D-aminoacyl-tRNA entities in vivo and helps enforce protein L-homochirality. This Lactobacillus delbrueckii subsp. bulgaricus (strain ATCC 11842 / DSM 20081 / BCRC 10696 / JCM 1002 / NBRC 13953 / NCIMB 11778 / NCTC 12712 / WDCM 00102 / Lb 14) protein is D-aminoacyl-tRNA deacylase.